We begin with the raw amino-acid sequence, 161 residues long: Lipoprotein signal peptidase (161 aa).

The next 3 membrane-spanning stretches (helical) occupy residues 9 to 29 (ISLLMTIIVLVFDQVSKWLIT), 63 to 83 (KMLFFYIITIIILIVLVIFYI), and 88 to 108 (FNLFMQVAISLLFAGALGNFI). Active-site residues include aspartate 118 and aspartate 136. Residues 131–151 (IFNIADSSLTIGVIFVIIALI) traverse the membrane as a helical segment.

It belongs to the peptidase A8 family.

Its subcellular location is the cell membrane. It catalyses the reaction Release of signal peptides from bacterial membrane prolipoproteins. Hydrolyzes -Xaa-Yaa-Zaa-|-(S,diacylglyceryl)Cys-, in which Xaa is hydrophobic (preferably Leu), and Yaa (Ala or Ser) and Zaa (Gly or Ala) have small, neutral side chains.. The protein operates within protein modification; lipoprotein biosynthesis (signal peptide cleavage). Its function is as follows. This protein specifically catalyzes the removal of signal peptides from prolipoproteins. This chain is Lipoprotein signal peptidase, found in Staphylococcus epidermidis (strain ATCC 12228 / FDA PCI 1200).